Reading from the N-terminus, the 486-residue chain is CREB-regulated transcription coactivator 1 homolog (486 aa).

Residues 1–62 form a disordered region; sequence MSNSNTPRKF…APMPIPQQGL (62 aa). Residues 9-23 show a composition bias toward basic and acidic residues; it reads KFSEKIAILERKQNE. Residues 34–52 are compositionally biased toward polar residues; the sequence is QVQSITHHPTDSSGSSTAT. Serine 76 is modified (phosphoserine; by AMPK). Positions 103 to 166 are disordered; the sequence is PIQGHRSRSP…PPYNQPGQLV (64 aa). A compositionally biased stretch (pro residues) spans 144-160; sequence RTPPQHPQYTPYGPPYN. At serine 179 the chain carries Phosphoserine; by AMPK. 3 disordered regions span residues 214–278, 327–417, and 460–486; these read SMPG…QSPN, FNQD…SNSP, and APPQ…MLQN. Composition is skewed to polar residues over residues 224-245, 387-402, and 461-475; these read PNSQ…QGSP, PESQ…QLDP, and PPQT…NNSF.

This sequence belongs to the TORC family. In terms of assembly, interacts with crh-1. Phosphorylated by AMPK at Ser-76 and Ser-179. Dephosphorylated by tax-6, the catalytic subunit of calcineurin. As to expression, expressed throughout the intestine and in head and tail neurons. Expressed in octopaminergic RIC neurons.

The protein localises to the nucleus. The protein resides in the cytoplasm. It localises to the cytosol. Functionally, transcriptional coactivator for crh-1, the homolog of vertebrate transcription factor CREB1. Regulates the transcription of metabolic genes and may have a role in mitochondrial dynamics and metabolism. Involved in modulation of lifespan. Through crh-1, counteracts the pro-lifespan-extension signals of AMPK both cell autonomously and, when expressed in neurons, at a systemic level, possibly using the catecholamine analog, octopamine, as a messenger. The chain is CREB-regulated transcription coactivator 1 homolog from Caenorhabditis elegans.